We begin with the raw amino-acid sequence, 122 residues long: Atrial gland peptide B (122 aa).

The N-terminal stretch at 1–21 (MKANTMFIILCLTLSTLCVSS) is a signal peptide. The propeptide occupies 22-34 (QFTSVLGKIFVTN). I69 is subject to Isoleucine amide. A propeptide spanning residues 73-122 (AAGGMEQSEGQNPETKSHSWRERSVLTPSLLSLGESLESGISKRISINQD) is cleaved from the precursor. Residues 74–95 (AGGMEQSEGQNPETKSHSWRER) form a disordered region.

This sequence belongs to the molluscan ELH family.

It is found in the secreted. Its function is as follows. The atrial gland peptide A and peptide B precursors are the source of the 2 peptides that, upon release from this reproductive system gland, initiate the egg-laying process by exciting the bag cell neurons. These neurons, clustered in neural connectives near the abdominal ganglion, in turn release other peptides that act directly on the ganglion and also, via the circulating hemolymph, on many other organs to control the physiological processes of egg-laying. One of these other peptides is the egg-laying hormone. This is Atrial gland peptide B from Aplysia californica (California sea hare).